A 354-amino-acid polypeptide reads, in one-letter code: Heat-inducible transcription repressor HrcA (354 aa).

This sequence belongs to the HrcA family.

Negative regulator of class I heat shock genes (grpE-dnaK-dnaJ and groELS operons). Prevents heat-shock induction of these operons. The protein is Heat-inducible transcription repressor HrcA of Novosphingobium aromaticivorans (strain ATCC 700278 / DSM 12444 / CCUG 56034 / CIP 105152 / NBRC 16084 / F199).